The sequence spans 255 residues: Transcription factor CAULIFLOWER (255 aa).

Residues 1 to 61 (MGRGRVELKR…GKLFEYSSES (61 aa)) form the MADS-box domain. In terms of domain architecture, K-box spans 90-180 (QTNWSMEYSR…TKQIKERENI (91 aa)). Residues 90-198 (QTNWSMEYSR…EQLNRSVDDV (109 aa)) adopt a coiled-coil conformation.

In terms of assembly, homodimer capable of binding to CArG-box sequences. As to expression, expressed in young flower primordia.

The protein resides in the nucleus. In terms of biological role, probable transcription factor that promotes early floral meristem identity in synergy with APETALA1, FRUITFULL and LEAFY. Is required subsequently for the transition of an inflorescence meristem into a floral meristem. Seems to be partially redundant to the function of APETALA1. Positively regulates the APETALA1 and LEAFY expression. In Arabidopsis thaliana (Mouse-ear cress), this protein is Transcription factor CAULIFLOWER (CAL).